Reading from the N-terminus, the 359-residue chain is Isopentenyl-diphosphate delta-isomerase (359 aa).

12–13 provides a ligand contact to substrate; the sequence is RK. FMN contacts are provided by residues serine 68, 69–71, serine 99, and asparagine 128; that span reads AMT. 99–101 is a substrate binding site; it reads SQR. Glutamine 162 provides a ligand contact to substrate. Glutamate 163 contributes to the Mg(2+) binding site. Residues lysine 194, threonine 224, 277–279, and 298–299 contribute to the FMN site; these read GIR and AL.

The protein belongs to the IPP isomerase type 2 family. In terms of assembly, homooctamer. Dimer of tetramers. Requires FMN as cofactor. The cofactor is NADPH. Mg(2+) is required as a cofactor.

The protein localises to the cytoplasm. The catalysed reaction is isopentenyl diphosphate = dimethylallyl diphosphate. Its function is as follows. Involved in the biosynthesis of isoprenoids. Catalyzes the 1,3-allylic rearrangement of the homoallylic substrate isopentenyl (IPP) to its allylic isomer, dimethylallyl diphosphate (DMAPP). The sequence is that of Isopentenyl-diphosphate delta-isomerase from Methanoregula boonei (strain DSM 21154 / JCM 14090 / 6A8).